Reading from the N-terminus, the 699-residue chain is Dymeclin (699 aa).

Glycine 2 carries N-myristoyl glycine lipidation. Residue serine 346 is modified to Phosphoserine.

The protein belongs to the dymeclin family.

The chain is Dymeclin from Drosophila melanogaster (Fruit fly).